Consider the following 420-residue polypeptide: Pregnancy-associated glycoprotein 2 (420 aa).

The signal sequence occupies residues Met-1–Cys-15. Residues Asn-56 and Asn-79 are each glycosylated (N-linked (GlcNAc...) asparagine). A Peptidase A1 domain is found at Tyr-76–Ala-417. Asp-94 is a catalytic residue. Cystine bridges form between Cys-107/Cys-112 and Cys-268/Cys-272. Asp-277 is an active-site residue. Cys-341 and Cys-376 are joined by a disulfide.

This sequence belongs to the peptidase A1 family. In terms of tissue distribution, expressed throughout the chorion, with the signal localized exclusively over the trophectoderm.

The protein localises to the secreted. It is found in the extracellular space. The chain is Pregnancy-associated glycoprotein 2 (PAG2) from Sus scrofa (Pig).